The primary structure comprises 459 residues: Endoglucanase CelA (459 aa).

Residues 1–27 form the signal peptide; it reads MKRLLALLATGVSIVGLTALAGPPAQA. The 107-residue stretch at 28-134 folds into the CBM2 domain; sequence ATGCKAEYTI…TLNGATCSGS (107 aa). A disulfide bridge connects residues Cys31 and Cys131. Residues 129 to 151 form a disordered region; the sequence is ATCSGSVTDPPTDPPTDPPATGT. A linker ('hinge') (Pro-Thr box) region spans residues 136-147; the sequence is TDPPTDPPTDPP. The interval 148 to 357 is catalytic; that stretch reads ATGTPAAVNG…YAFHFYAASH (210 aa). Glu286 functions as the Proton donor in the catalytic mechanism. Glu378 (nucleophile) is an active-site residue.

This sequence belongs to the glycosyl hydrolase 5 (cellulase A) family. Post-translationally, the linker region (also termed 'hinge') may be a potential site for proteolysis.

The catalysed reaction is Endohydrolysis of (1-&gt;4)-beta-D-glucosidic linkages in cellulose, lichenin and cereal beta-D-glucans.. This chain is Endoglucanase CelA (celA), found in Streptomyces lividans.